Reading from the N-terminus, the 463-residue chain is ATP synthase subunit beta 1 (463 aa).

152–159 (GGAGVGKT) is an ATP binding site.

Belongs to the ATPase alpha/beta chains family. In terms of assembly, F-type ATPases have 2 components, CF(1) - the catalytic core - and CF(0) - the membrane proton channel. CF(1) has five subunits: alpha(3), beta(3), gamma(1), delta(1), epsilon(1). CF(0) has three main subunits: a(1), b(2) and c(9-12). The alpha and beta chains form an alternating ring which encloses part of the gamma chain. CF(1) is attached to CF(0) by a central stalk formed by the gamma and epsilon chains, while a peripheral stalk is formed by the delta and b chains.

The protein localises to the cell inner membrane. It catalyses the reaction ATP + H2O + 4 H(+)(in) = ADP + phosphate + 5 H(+)(out). In terms of biological role, produces ATP from ADP in the presence of a proton gradient across the membrane. The catalytic sites are hosted primarily by the beta subunits. This chain is ATP synthase subunit beta 1, found in Shewanella frigidimarina (strain NCIMB 400).